The following is a 100-amino-acid chain: Co-chaperonin GroES (100 aa).

This sequence belongs to the GroES chaperonin family. As to quaternary structure, heptamer of 7 subunits arranged in a ring. Interacts with the chaperonin GroEL.

The protein localises to the cytoplasm. Its function is as follows. Together with the chaperonin GroEL, plays an essential role in assisting protein folding. The GroEL-GroES system forms a nano-cage that allows encapsulation of the non-native substrate proteins and provides a physical environment optimized to promote and accelerate protein folding. GroES binds to the apical surface of the GroEL ring, thereby capping the opening of the GroEL channel. This chain is Co-chaperonin GroES, found in Mycobacterium leprae (strain Br4923).